A 93-amino-acid polypeptide reads, in one-letter code: Aspartyl/glutamyl-tRNA(Asn/Gln) amidotransferase subunit C (93 aa).

The protein belongs to the GatC family. In terms of assembly, heterotrimer of A, B and C subunits.

It carries out the reaction L-glutamyl-tRNA(Gln) + L-glutamine + ATP + H2O = L-glutaminyl-tRNA(Gln) + L-glutamate + ADP + phosphate + H(+). The enzyme catalyses L-aspartyl-tRNA(Asn) + L-glutamine + ATP + H2O = L-asparaginyl-tRNA(Asn) + L-glutamate + ADP + phosphate + 2 H(+). Its function is as follows. Allows the formation of correctly charged Asn-tRNA(Asn) or Gln-tRNA(Gln) through the transamidation of misacylated Asp-tRNA(Asn) or Glu-tRNA(Gln) in organisms which lack either or both of asparaginyl-tRNA or glutaminyl-tRNA synthetases. The reaction takes place in the presence of glutamine and ATP through an activated phospho-Asp-tRNA(Asn) or phospho-Glu-tRNA(Gln). This chain is Aspartyl/glutamyl-tRNA(Asn/Gln) amidotransferase subunit C, found in Methanococcoides burtonii (strain DSM 6242 / NBRC 107633 / OCM 468 / ACE-M).